Here is a 92-residue protein sequence, read N- to C-terminus: MARSLKKGPFVHYKLDKKVQENVESGKNSVVKTWSRASMITPDFVGQTIAVHNGRQFVPVYVTENMVGHKLGEFSPTRSFRGHAGAKNKGKK.

The disordered stretch occupies residues 72-92 (GEFSPTRSFRGHAGAKNKGKK). Basic residues predominate over residues 80-92 (FRGHAGAKNKGKK).

It belongs to the universal ribosomal protein uS19 family.

Protein S19 forms a complex with S13 that binds strongly to the 16S ribosomal RNA. The chain is Small ribosomal subunit protein uS19 from Flavobacterium johnsoniae (strain ATCC 17061 / DSM 2064 / JCM 8514 / BCRC 14874 / CCUG 350202 / NBRC 14942 / NCIMB 11054 / UW101) (Cytophaga johnsonae).